The chain runs to 148 residues: 3-hydroxyacyl-[acyl-carrier-protein] dehydratase FabZ (148 aa).

The active site involves histidine 48.

It belongs to the thioester dehydratase family. FabZ subfamily.

The protein resides in the cytoplasm. The enzyme catalyses a (3R)-hydroxyacyl-[ACP] = a (2E)-enoyl-[ACP] + H2O. Involved in unsaturated fatty acids biosynthesis. Catalyzes the dehydration of short chain beta-hydroxyacyl-ACPs and long chain saturated and unsaturated beta-hydroxyacyl-ACPs. This chain is 3-hydroxyacyl-[acyl-carrier-protein] dehydratase FabZ, found in Acinetobacter baylyi (strain ATCC 33305 / BD413 / ADP1).